The primary structure comprises 191 residues: MAARAQAWLFAAALVIFHGSEYVLAAAFHGRRNVTATSLLISKQYVLAMSFAMLEHLTEALLFPELKEYWFVSYVGLVMVIIGEVIRKLAVVTAGRSFTHVIRIHYEDQHKLITHGVYRLMRHPGYSGFLIWAVGTQVMLCNPLSTVAFTLVLWRFFSKRIPYEEFFLRQFFGREYEEYAQKVHSGLPFIE.

3 helical membrane-spanning segments follow: residues 8–28 (WLFAAALVIFHGSEYVLAAAF), 45–65 (YVLAMSFAMLEHLTEALLFPE), and 66–86 (LKEYWFVSYVGLVMVIIGEVI). Residues 110 to 113 (HKLI), Tyr-118, and 123 to 126 (HPGY) each bind S-adenosyl-L-methionine. Residues 129–149 (FLIWAVGTQVMLCNPLSTVAF) form a helical membrane-spanning segment. Arg-160 contacts substrate. Glu-164 contributes to the S-adenosyl-L-methionine binding site.

Belongs to the class VI-like SAM-binding methyltransferase superfamily. Isoprenylcysteine carboxyl methyltransferase family. It depends on Zn(2+) as a cofactor.

The protein resides in the endoplasmic reticulum membrane. It catalyses the reaction [protein]-C-terminal S-[(2E,6E)-farnesyl]-L-cysteine + S-adenosyl-L-methionine = [protein]-C-terminal S-[(2E,6E)-farnesyl]-L-cysteine methyl ester + S-adenosyl-L-homocysteine. Functionally, catalyzes the post-translational methylation of isoprenylated C-terminal cysteine residues. Carboxyl methylation is a reversible and potentially regulated step in the post-translational modification of prenylated proteins. In Oryza sativa subsp. indica (Rice), this protein is Probable protein-S-isoprenylcysteine O-methyltransferase (ICMT).